A 464-amino-acid polypeptide reads, in one-letter code: F-box/FBD/LRR-repeat protein At1g80470 (464 aa).

The F-box domain maps to 15–62 (DWISGLADDLLLQILSKVPTRESVFTSRMSKRWRNLWRHVPALDLDSS). LRR repeat units follow at residues 96-122 (EEHC…TILS), 123-150 (KVNI…TLYS), 152-178 (VFDA…KFDG), 197-222 (IITH…KLES), 223-249 (MRED…SITD), and 273-298 (DAED…TISA). Residues 359–413 (KEEINLSLVPHCFESSLEYVQLKVPITVSETSSKMELAIYFVRNCSVLKKLMLNE) form the FBD domain.

The sequence is that of F-box/FBD/LRR-repeat protein At1g80470 from Arabidopsis thaliana (Mouse-ear cress).